The sequence spans 1434 residues: Ankyrin and armadillo repeat-containing protein (1434 aa).

The helical transmembrane segment at 309–329 (IRRGIGYLKLICFLIPFLLSL) threads the bilayer. ANK repeat units lie at residues 532-561 (AGYT…KVNQ), 569-598 (QGPT…DYTL), 602-631 (RGWM…SLLE), 638-667 (NQCT…NWRK), and 671-701 (KGNN…ELPV). 6 ARM repeats span residues 732–771 (DQYW…NIST), 773–812 (KSAV…DIAQ), 814–852 (ENKD…VLCI), 855–894 (ENNQ…EVGR), 897–936 (KEIQ…SLAS), and 1072–1112 (PVSQ…CIVL).

In terms of tissue distribution, ubiquitously expressed with highest level in pancreas and lowest in skeletal muscle.

It localises to the membrane. This Homo sapiens (Human) protein is Ankyrin and armadillo repeat-containing protein (ANKAR).